The sequence spans 385 residues: Putative nickel insertion protein (385 aa).

This sequence belongs to the LarC family.

The protein is Putative nickel insertion protein of Citrifermentans bemidjiense (strain ATCC BAA-1014 / DSM 16622 / JCM 12645 / Bem) (Geobacter bemidjiensis).